Here is a 339-residue protein sequence, read N- to C-terminus: Methylcobamide:CoM methyltransferase MtaA (339 aa).

Zn(2+) is bound by residues His-237, Cys-239, and Cys-316.

Belongs to the uroporphyrinogen decarboxylase family. MtbA/mtaA subfamily. It depends on Zn(2+) as a cofactor.

It catalyses the reaction methyl-Co(III)-[methanol-specific corrinoid protein] + coenzyme M = Co(I)-[methanol-specific corrinoid protein] + methyl-coenzyme M + H(+). Methyltransferase involved in methanogenesis in the methanol pathway. Catalyzes the transfer of the methyl group from the methylated corrinoid protein MtaC to coenzyme M, forming the substrate for coenzyme-B sulfoethylthiotransferase. MtaC can be substituted by free cob(I)alamin in vitro. This chain is Methylcobamide:CoM methyltransferase MtaA (mtaA), found in Methanosarcina barkeri (strain Fusaro / DSM 804).